A 415-amino-acid chain; its full sequence is Serine hydroxymethyltransferase 1 (415 aa).

(6S)-5,6,7,8-tetrahydrofolate is bound by residues L122 and 126–128; that span reads GHL. At K230 the chain carries N6-(pyridoxal phosphate)lysine.

The protein belongs to the SHMT family. In terms of assembly, homodimer. It depends on pyridoxal 5'-phosphate as a cofactor.

The protein localises to the cytoplasm. It carries out the reaction (6R)-5,10-methylene-5,6,7,8-tetrahydrofolate + glycine + H2O = (6S)-5,6,7,8-tetrahydrofolate + L-serine. Its pathway is one-carbon metabolism; tetrahydrofolate interconversion. The protein operates within amino-acid biosynthesis; glycine biosynthesis; glycine from L-serine: step 1/1. Functionally, catalyzes the reversible interconversion of serine and glycine with tetrahydrofolate (THF) serving as the one-carbon carrier. This reaction serves as the major source of one-carbon groups required for the biosynthesis of purines, thymidylate, methionine, and other important biomolecules. Also exhibits THF-independent aldolase activity toward beta-hydroxyamino acids, producing glycine and aldehydes, via a retro-aldol mechanism. In Cupriavidus pinatubonensis (strain JMP 134 / LMG 1197) (Cupriavidus necator (strain JMP 134)), this protein is Serine hydroxymethyltransferase 1.